Reading from the N-terminus, the 402-residue chain is Protein prenyltransferase alpha subunit repeat-containing protein 1 (402 aa).

Position 2 is an N-acetylalanine (Ala2). PFTA repeat units follow at residues 87 to 120 (LIDV…LNPI), 122 to 155 (DLHL…QETS), 180 to 213 (EMEV…KLDV), and 219 to 252 (ELSS…SQTV). The tract at residues 263-282 (LRSEPALVPPKDEEAAVSTE) is disordered. Residues 295–328 (EVEFSTDLIDSYPGHETLWCHRRHIFYLQHHLNA) form a PFTA 5 repeat.

It belongs to the protein prenyltransferase subunit alpha family.

The chain is Protein prenyltransferase alpha subunit repeat-containing protein 1 (PTAR1) from Homo sapiens (Human).